Reading from the N-terminus, the 127-residue chain is Dual endothelin-1/VEGF signal peptide receptor (127 aa).

Topologically, residues 1 to 65 are extracellular; it reads MNALYVTTVP…EMKSRWNWGS (65 aa). Residues 66–84 traverse the membrane as a helical segment; it reads ITCIICFTCVGSQLSMSSS. At 85–127 the chain is on the cytoplasmic side; it reads KASNFSGPLQLYQRGIGHITNSYKRPQAPAWPCLSSGTMGRSH.

Widely expressed with higher levels in kidney and aorta.

It is found in the cell membrane. Functionally, dual receptor for both endothelin-1 and the signal sequence of vascular endothelial growth factor A. Does not act as a receptor for angiotensin-2. Does not bind the VEGFA mature protein. May play a role in angiogenesis with a significant role in cardiovascular and neural development. In Mus musculus (Mouse), this protein is Dual endothelin-1/VEGF signal peptide receptor.